Consider the following 660-residue polypeptide: tRNA 5-methylaminomethyl-2-thiouridine biosynthesis bifunctional protein MnmC (660 aa).

The segment at 1–242 (MTDRIVPATL…KRAMLVGEFA (242 aa)) is tRNA (mnm(5)s(2)U34)-methyltransferase. The interval 266–660 (IGAGLAGCAV…VRALRHGRVA (395 aa)) is FAD-dependent cmnm(5)s(2)U34 oxidoreductase.

In the N-terminal section; belongs to the methyltransferase superfamily. tRNA (mnm(5)s(2)U34)-methyltransferase family. It in the C-terminal section; belongs to the DAO family. Requires FAD as cofactor.

It is found in the cytoplasm. The enzyme catalyses 5-aminomethyl-2-thiouridine(34) in tRNA + S-adenosyl-L-methionine = 5-methylaminomethyl-2-thiouridine(34) in tRNA + S-adenosyl-L-homocysteine + H(+). Catalyzes the last two steps in the biosynthesis of 5-methylaminomethyl-2-thiouridine (mnm(5)s(2)U) at the wobble position (U34) in tRNA. Catalyzes the FAD-dependent demodification of cmnm(5)s(2)U34 to nm(5)s(2)U34, followed by the transfer of a methyl group from S-adenosyl-L-methionine to nm(5)s(2)U34, to form mnm(5)s(2)U34. The sequence is that of tRNA 5-methylaminomethyl-2-thiouridine biosynthesis bifunctional protein MnmC from Burkholderia pseudomallei (strain 1106a).